The chain runs to 130 residues: Calcitonin gene-related peptide 2 (130 aa).

An N-terminal signal peptide occupies residues 1-26 (MDFWKFFPFLALSTIWVLCLASSLQA). The propeptide occupies 27–82 (APFRSALESSLDLGTLGDQEKHLLLAALMQDYEQMKARKLEQEEQETKGSRVTAQK). A disulfide bridge connects residues cysteine 85 and cysteine 90. At phenylalanine 120 the chain carries Phenylalanine amide. The propeptide occupies 127–130 (DLQA).

This sequence belongs to the calcitonin family. In terms of tissue distribution, detected in nerve cells of cerebrum, hippocampus and pons/midbrain in newborns, and only in nerve cells of pons/midbrain in adult.

The protein localises to the secreted. In terms of biological role, CALCB/CGRP2 is a peptide hormone that induces vasodilation mediated by the CALCRL-RAMP1 receptor complex. Dilates a variety of vessels including the coronary, cerebral and systemic vasculature. Its abundance in the CNS also points toward a neurotransmitter or neuromodulator role. The chain is Calcitonin gene-related peptide 2 from Mus musculus (Mouse).